A 610-amino-acid polypeptide reads, in one-letter code: DNA mismatch repair protein MutL (610 aa).

The interval 351–406 is disordered; sequence GQRPQAPWSAETSPSRPYQPAPAFSERPQASFDGLSTPTARAEPQFSPDPVSPGLA.

This sequence belongs to the DNA mismatch repair MutL/HexB family.

Its function is as follows. This protein is involved in the repair of mismatches in DNA. It is required for dam-dependent methyl-directed DNA mismatch repair. May act as a 'molecular matchmaker', a protein that promotes the formation of a stable complex between two or more DNA-binding proteins in an ATP-dependent manner without itself being part of a final effector complex. The chain is DNA mismatch repair protein MutL from Rhizobium etli (strain ATCC 51251 / DSM 11541 / JCM 21823 / NBRC 15573 / CFN 42).